Consider the following 376-residue polypeptide: MRGKTFRFEMQRDLVSFPLSPAVRVKLVSAGFQTAEELLEVKPSELSKEVGISKAEALETLQIIRRECLTNKPRYAGTSESHKKCTALELLEQEHTQGFIITFCSALDDILGGGVPLMKTTEICGAPGVGKTQLCMQLAVDVQIPECFGGVAGEAVFIDTEGSFMVDRVVDLATACIQHLQLIAEKHKGEEHRKALEDFTLDNILSHIYYFRCRDYTELLAQVYLLPDFLSEHSKVRLVIVDGIAFPFRHDLDDLSLRTRLLNGLAQQMISLANNHRLAVILTNQMTTKIDRNQALLVPALGESWGHAATIRLIFHWDRKQRLATLYKSPSQKECTVLFQIKPQGFRDTVVTSACSLQTEGSLSTRKRSRDPEEEL.

Residues 1–126 (MRGKTFRFEM…LMKTTEICGA (126 aa)) form a required for Holliday junction resolution activity region. At serine 20 the chain carries Phosphoserine. The interaction with RAD51B, RAD51D and XRCC3 stretch occupies residues 79-136 (SESHKKCTALELLEQEHTQGFIITFCSALDDILGGGVPLMKTTEICGAPGVGKTQLCM). ATP is bound at residue 125–132 (GAPGVGKT). Positions 366–370 (RKRSR) match the Nuclear localization signal motif.

This sequence belongs to the RecA family. RAD51 subfamily. As to quaternary structure, part of the RAD51 paralog protein complexes BCDX2 and CX3; the complexes have a ring-like structure arranged into a flat disc around a central channel. The BCDX2 complex consits of RAD51B, RAD51C, RAD51D and XRCC2; the CX3 complex consists of RAD51C and XRCC3. The BCDX2 subcomplex RAD51B:RAD51C interacts with RAD51. Interacts with SWSAP1; involved in homologous recombination repair. Interacts directly with PALB2 which may serve as a scaffold for a HR complex containing PALB2, BRCA2, RAD51C, RAD51 and XRCC3. Interacts with HELQ. Interacts with DNA damage up-regulated protein DDUP. Expressed in a variety of tissues, with highest expression in testis, heart muscle, spleen and prostate.

Its subcellular location is the nucleus. The protein resides in the cytoplasm. The protein localises to the perinuclear region. It localises to the mitochondrion. Its function is as follows. Essential for the homologous recombination (HR) pathway of DNA repair. Involved in the homologous recombination repair (HRR) pathway of double-stranded DNA breaks arising during DNA replication or induced by DNA-damaging agents. Part of the RAD51 paralog protein complexes BCDX2 and CX3 which act at different stages of the BRCA1-BRCA2-dependent HR pathway. Upon DNA damage, BCDX2 seems to act downstream of BRCA2 recruitment and upstream of RAD51 recruitment; CX3 seems to act downstream of RAD51 recruitment; both complexes bind predominantly to the intersection of the four duplex arms of the Holliday junction (HJ) and to junction of replication forks. The BCDX2 complex was originally reported to bind single-stranded DNA, single-stranded gaps in duplex DNA and specifically to nicks in duplex DNA. The BCDX2 subcomplex RAD51B:RAD51C exhibits single-stranded DNA-dependent ATPase activity suggesting an involvement in early stages of the HR pathway. Involved in RAD51 foci formation in response to DNA damage suggesting an involvement in early stages of HR probably in the invasion step. Has an early function in DNA repair in facilitating phosphorylation of the checkpoint kinase CHEK2 and thereby transduction of the damage signal, leading to cell cycle arrest and HR activation. Participates in branch migration and HJ resolution and thus is important for processing HR intermediates late in the DNA repair process; the function may be linked to the CX3 complex. Part of a PALB2-scaffolded HR complex containing BRCA2 and which is thought to play a role in DNA repair by HR. Protects RAD51 from ubiquitin-mediated degradation that is enhanced following DNA damage. Plays a role in regulating mitochondrial DNA copy number under conditions of oxidative stress in the presence of RAD51 and XRCC3. Contributes to DNA cross-link resistance, sister chromatid cohesion and genomic stability. Involved in maintaining centrosome number in mitosis. The protein is DNA repair protein RAD51 homolog 3 (RAD51C) of Homo sapiens (Human).